A 1051-amino-acid chain; its full sequence is Exportin-T (1051 aa).

Belongs to the exportin family.

It localises to the nucleus. It is found in the cytoplasm. In terms of biological role, tRNA nucleus export receptor which facilitates tRNA translocation across the nuclear pore complex. Involved in pre-tRNA splicing, probably by affecting the interaction of pre-tRNA with splicing endonuclease. The chain is Exportin-T (LOS1) from Eremothecium gossypii (strain ATCC 10895 / CBS 109.51 / FGSC 9923 / NRRL Y-1056) (Yeast).